We begin with the raw amino-acid sequence, 37 residues long: Large ribosomal subunit protein bL36 (37 aa).

It belongs to the bacterial ribosomal protein bL36 family.

The protein is Large ribosomal subunit protein bL36 (rpmJ) of Mycobacterium tuberculosis (strain ATCC 25618 / H37Rv).